The chain runs to 471 residues: UDP-N-acetylmuramoylalanine--D-glutamate ligase (471 aa).

123-129 contributes to the ATP binding site; that stretch reads GTNGKST.

It belongs to the MurCDEF family.

Its subcellular location is the cytoplasm. The enzyme catalyses UDP-N-acetyl-alpha-D-muramoyl-L-alanine + D-glutamate + ATP = UDP-N-acetyl-alpha-D-muramoyl-L-alanyl-D-glutamate + ADP + phosphate + H(+). It participates in cell wall biogenesis; peptidoglycan biosynthesis. In terms of biological role, cell wall formation. Catalyzes the addition of glutamate to the nucleotide precursor UDP-N-acetylmuramoyl-L-alanine (UMA). This Caulobacter vibrioides (strain ATCC 19089 / CIP 103742 / CB 15) (Caulobacter crescentus) protein is UDP-N-acetylmuramoylalanine--D-glutamate ligase.